A 60-amino-acid chain; its full sequence is UPF0337 protein asr4653 (60 aa).

This sequence belongs to the UPF0337 (CsbD) family.

This is UPF0337 protein asr4653 from Nostoc sp. (strain PCC 7120 / SAG 25.82 / UTEX 2576).